A 317-amino-acid polypeptide reads, in one-letter code: Ciliary microtubule inner protein 2A (317 aa).

The segment at 131–153 (TPDTPHPPCPPGRKGDSRDLGHP) is disordered.

The protein belongs to the CIMIP2 family. In terms of assembly, microtubule inner protein component of sperm flagellar doublet microtubules.

Its subcellular location is the cytoplasm. The protein resides in the cytoskeleton. It is found in the flagellum axoneme. Its function is as follows. Microtubule inner protein (MIP) part of the dynein-decorated doublet microtubules (DMTs) in flagellum axoneme. Binds to the intra-tubulin interfaces. In Homo sapiens (Human), this protein is Ciliary microtubule inner protein 2A.